We begin with the raw amino-acid sequence, 76 residues long: Small ribosomal subunit protein bS18 (76 aa).

Belongs to the bacterial ribosomal protein bS18 family. As to quaternary structure, part of the 30S ribosomal subunit. Forms a tight heterodimer with protein bS6.

Binds as a heterodimer with protein bS6 to the central domain of the 16S rRNA, where it helps stabilize the platform of the 30S subunit. The polypeptide is Small ribosomal subunit protein bS18 (Nitrosomonas europaea (strain ATCC 19718 / CIP 103999 / KCTC 2705 / NBRC 14298)).